A 256-amino-acid polypeptide reads, in one-letter code: Galactitol 2-dehydrogenase (256 aa).

Residues 15–17 (RGI), Asp-36, 59–60 (DV), Asn-86, Tyr-152, and Lys-156 each bind NAD(+). Tyr-152 acts as the Proton acceptor in catalysis.

It belongs to the short-chain dehydrogenases/reductases (SDR) family.

It carries out the reaction galactitol + NAD(+) = keto-D-tagatose + NADH + H(+). It catalyses the reaction keto-D-fructose + NADH + H(+) = D-sorbitol + NAD(+). The protein operates within carbohydrate metabolism. In terms of biological role, involved in galactitol catabolism. Catalyzes the oxidation of galactitol to D-tagatose. Can also catalyze the oxidation of D-sorbitol to D-fructose. In Agrobacterium fabrum (strain C58 / ATCC 33970) (Agrobacterium tumefaciens (strain C58)), this protein is Galactitol 2-dehydrogenase.